The following is a 352-amino-acid chain: Ion-translocating oxidoreductase complex subunit D (352 aa).

The next 4 helical transmembrane spans lie at I20–G40, G42–L62, V69–P91, and P123–L143. T187 is subject to FMN phosphoryl threonine. The next 5 helical transmembrane spans lie at L215–L235, W242–F262, L267–L287, L301–P321, and D322–T342.

This sequence belongs to the NqrB/RnfD family. The complex is composed of six subunits: RsxA, RsxB, RsxC, RsxD, RsxE and RsxG. FMN serves as cofactor.

Its subcellular location is the cell inner membrane. In terms of biological role, part of a membrane-bound complex that couples electron transfer with translocation of ions across the membrane. Required to maintain the reduced state of SoxR. The polypeptide is Ion-translocating oxidoreductase complex subunit D (Salmonella enteritidis PT4 (strain P125109)).